The primary structure comprises 475 residues: Cytochrome P450 monooxygenase sthD (475 aa).

An N-terminal signal peptide occupies residues 1–17 (MAAYFLLGLYGSTLVYR). Residues 276–296 (FIIIAGSDTVAATLTFAFFYL) form a helical membrane-spanning segment. The N-linked (GlcNAc...) asparagine glycan is linked to Asn336. Cys418 provides a ligand contact to heme.

Belongs to the cytochrome P450 family. Requires heme as cofactor.

Its subcellular location is the membrane. It carries out the reaction betaenone A + NADPH + O2 + H(+) = stemphyloxin II + NADP(+) + H2O. The catalysed reaction is betaenone C + NADPH + O2 + H(+) = stemphyloxin I + NADP(+) + H2O. It functions in the pathway mycotoxin biosynthesis. Functionally, cytochrome P450 monooxygenase; part of the gene cluster that mediates the biosynthesis of the phytotoxin stemphyloxin II. The first step of the pathway is the synthesis of dehydroprobetaenone I by the polyketide synthase sthA and the enoyl reductase sthE via condensation of one acetyl-CoA starter unit with 7 malonyl-CoA units and 5 methylations. The C-terminal reductase (R) domain of sthA catalyzes the reductive release of the polyketide chain. Because sthA lacks a designated enoylreductase (ER) domain, the required activity is provided the enoyl reductase sthE. The short-chain dehydrogenase/reductase sthC then catalyzes reduction of dehydroprobetaenone I to probetaenone I. The cytochrome P450 monooxygenase sthF catalyzes successive epoxidation, oxidation (resulting from epoxide opening) and hydroxylation to install a tertiary alcohol in the decaline ring to yield betaenone C from dehydroprobetaenone I and betaenone B from probetaenone I. The FAD-linked oxidoreductase sthB is responsible for the conversion of betaenone C to betaenone A via an intramolecular aldol reaction between C-1 and C-17 to form the bridged tricyclic system in betaenone A. Finally, the cytochrome P450 monooxygenase sthD catalyzes the hydroxylation of C-15 to afford the final metabolite stemphyloxin II. The polypeptide is Cytochrome P450 monooxygenase sthD (Phaeosphaeria nodorum (strain SN15 / ATCC MYA-4574 / FGSC 10173) (Glume blotch fungus)).